Reading from the N-terminus, the 343-residue chain is Small ribosomal subunit biogenesis GTPase RsgA (343 aa).

The interval 1-32 (MAKRRLSKRQVDRIRERQSQRLDTSVAAPDGK) is disordered. Residues 9-20 (RQVDRIRERQSQ) are compositionally biased toward basic and acidic residues. Positions 109–273 (YGKLKPVAAN…CIDSPGIREF (165 aa)) constitute a CP-type G domain. Residues 156-159 (NKLD) and 215-223 (GQSGVGKSS) contribute to the GTP site. Cys-297, Cys-302, His-304, and Cys-310 together coordinate Zn(2+).

It belongs to the TRAFAC class YlqF/YawG GTPase family. RsgA subfamily. Monomer. Associates with 30S ribosomal subunit, binds 16S rRNA. The cofactor is Zn(2+).

It localises to the cytoplasm. Its function is as follows. One of several proteins that assist in the late maturation steps of the functional core of the 30S ribosomal subunit. Helps release RbfA from mature subunits. May play a role in the assembly of ribosomal proteins into the subunit. Circularly permuted GTPase that catalyzes slow GTP hydrolysis, GTPase activity is stimulated by the 30S ribosomal subunit. The chain is Small ribosomal subunit biogenesis GTPase RsgA from Saccharophagus degradans (strain 2-40 / ATCC 43961 / DSM 17024).